The following is a 247-amino-acid chain: Aliphatic sulfonates import ATP-binding protein SsuB 2 (247 aa).

The region spanning 28 to 242 (VSVRGLQRRY…ALRPILLEEL (215 aa)) is the ABC transporter domain. 60–67 (GESGCGKT) contributes to the ATP binding site.

It belongs to the ABC transporter superfamily. Aliphatic sulfonates importer (TC 3.A.1.17.2) family. The complex is composed of two ATP-binding proteins (SsuB), two transmembrane proteins (SsuC) and a solute-binding protein (SsuA).

Its subcellular location is the cell inner membrane. It carries out the reaction ATP + H2O + aliphatic sulfonate-[sulfonate-binding protein]Side 1 = ADP + phosphate + aliphatic sulfonateSide 2 + [sulfonate-binding protein]Side 1.. Part of the ABC transporter complex SsuABC involved in aliphatic sulfonates import. Responsible for energy coupling to the transport system. This is Aliphatic sulfonates import ATP-binding protein SsuB 2 from Paraburkholderia xenovorans (strain LB400).